A 187-amino-acid polypeptide reads, in one-letter code: Protein lethal(2)essential for life (187 aa).

One can recognise a sHSP domain in the interval 61–170; the sequence is NSLQKQESGS…TERLVQITQT (110 aa). Residues 151-187 are disordered; sequence APMKALPPPQTERLVQITQTGPSSKEDNAKKVETSTA. The span at 174–187 shows a compositional bias: basic and acidic residues; the sequence is SKEDNAKKVETSTA.

This sequence belongs to the small heat shock protein (HSP20) family. In terms of tissue distribution, ubiquitously expressed during embryogenesis with no sign of tissue specificity in expression up to stage 16.

Vital role in embryonic development. This Drosophila melanogaster (Fruit fly) protein is Protein lethal(2)essential for life (l(2)efl).